An 88-amino-acid polypeptide reads, in one-letter code: MAHKKGASSSRNGRDSNAQRLGVKRFGGQVVKAGEILVRQRGTHFHPGVNVGRGGDDTLFATAPGAVEFGTKRGRKYVNIVRTVRSEA.

A disordered region spans residues 1 to 22 (MAHKKGASSSRNGRDSNAQRLG). Residues 7–19 (ASSSRNGRDSNAQ) show a composition bias toward polar residues.

This sequence belongs to the bacterial ribosomal protein bL27 family.

In Mycolicibacterium gilvum (strain PYR-GCK) (Mycobacterium gilvum (strain PYR-GCK)), this protein is Large ribosomal subunit protein bL27.